Consider the following 102-residue polypeptide: Large ribosomal subunit protein bL21 (102 aa).

The protein belongs to the bacterial ribosomal protein bL21 family. In terms of assembly, part of the 50S ribosomal subunit. Contacts protein L20.

Its function is as follows. This protein binds to 23S rRNA in the presence of protein L20. The polypeptide is Large ribosomal subunit protein bL21 (Nitratidesulfovibrio vulgaris (strain DSM 19637 / Miyazaki F) (Desulfovibrio vulgaris)).